The sequence spans 287 residues: Cbb3-type cytochrome c oxidase subunit FixPc (287 aa).

Residues 1–36 are Cytoplasmic-facing; it reads MSEKHIDEFSGVETTGHEWDGIRELNNPMPRWWVWT. A helical membrane pass occupies residues 37-57; that stretch reads FYATIVWALGYAIAYPAIPMI. Residues 58-287 are Periplasmic-facing; sequence TDATKGMLGF…IFVHSLGGGT (230 aa). Cytochrome c domains are found at residues 108–196 and 203–284; these read FAIA…WGLT and GLAE…HSLG. Cys-121, Cys-124, His-125, Met-173, Cys-216, Cys-219, His-220, and Met-261 together coordinate heme c.

This sequence belongs to the CcoP / FixP family. Component of the cbb3-type cytochrome c oxidase at least composed of FixN, FixO, FixQ and FixP. The cofactor is heme c.

It is found in the cell inner membrane. Its pathway is energy metabolism; oxidative phosphorylation. Functionally, C-type cytochrome. Part of the cbb3-type cytochrome c oxidase complex. FixP subunit is required for transferring electrons from donor cytochrome c via its heme groups to FixO subunit. From there, electrons are shuttled to the catalytic binuclear center of FixN subunit where oxygen reduction takes place. The complex also functions as a proton pump. This chain is Cbb3-type cytochrome c oxidase subunit FixPc, found in Rhizobium leguminosarum bv. viciae.